Here is a 201-residue protein sequence, read N- to C-terminus: Holliday junction branch migration complex subunit RuvA (201 aa).

The domain I stretch occupies residues 1–63 (MYAYIKGKLS…EDAQLLYGFM (63 aa)). The interval 64 to 142 (SEEEKGMFLS…ITEENPETLL (79 aa)) is domain II. The flexible linker stretch occupies residues 143-153 (NFEGSESNQTS). The interval 153–201 (SPILDEALLALEALGYSKRELNKVEKKLQAESYTSVDEAVKAGLKILVS) is domain III.

The protein belongs to the RuvA family. Homotetramer. Forms an RuvA(8)-RuvB(12)-Holliday junction (HJ) complex. HJ DNA is sandwiched between 2 RuvA tetramers; dsDNA enters through RuvA and exits via RuvB. An RuvB hexamer assembles on each DNA strand where it exits the tetramer. Each RuvB hexamer is contacted by two RuvA subunits (via domain III) on 2 adjacent RuvB subunits; this complex drives branch migration. In the full resolvosome a probable DNA-RuvA(4)-RuvB(12)-RuvC(2) complex forms which resolves the HJ.

It localises to the cytoplasm. Functionally, the RuvA-RuvB-RuvC complex processes Holliday junction (HJ) DNA during genetic recombination and DNA repair, while the RuvA-RuvB complex plays an important role in the rescue of blocked DNA replication forks via replication fork reversal (RFR). RuvA specifically binds to HJ cruciform DNA, conferring on it an open structure. The RuvB hexamer acts as an ATP-dependent pump, pulling dsDNA into and through the RuvAB complex. HJ branch migration allows RuvC to scan DNA until it finds its consensus sequence, where it cleaves and resolves the cruciform DNA. This is Holliday junction branch migration complex subunit RuvA from Staphylococcus carnosus (strain TM300).